A 337-amino-acid chain; its full sequence is Trace amine-associated receptor 5 (337 aa).

At Met1 to Gln34 the chain is on the extracellular side. Asn21 carries N-linked (GlcNAc...) asparagine glycosylation. 2 disulfide bridges follow: Cys24-Cys188 and Cys99-Cys192. A helical membrane pass occupies residues Leu35–Val55. Residues Ala56–Asn70 lie on the Cytoplasmic side of the membrane. A helical transmembrane segment spans residues Phe71–Ser91. The Extracellular portion of the chain corresponds to Thr92–Leu109. A helical transmembrane segment spans residues His110–Ile130. Over Asp131–Tyr154 the chain is Cytoplasmic. Residues Ile155–Val175 form a helical membrane-spanning segment. The tract at residues Glu176–Val189 is extracellular Loop 2 (ECL2). Topologically, residues Glu176–Asn204 are extracellular. A helical transmembrane segment spans residues Phe205 to Val225. The Cytoplasmic portion of the chain corresponds to Ala226 to Thr253. A helical membrane pass occupies residues Leu254–Val274. Residues Asp275 to Pro284 are Extracellular-facing. Residues Leu285–Phe307 form a helical membrane-spanning segment. At Ser308 to Glu337 the chain is on the cytoplasmic side.

This sequence belongs to the G-protein coupled receptor 1 family.

The protein localises to the cell membrane. Its function is as follows. Olfactory receptor specific for trimethylamine, a trace amine. Trimethylamine is a bacterial metabolite found in some animal odors. Trimethylamine-binding causes a conformation change that triggers signaling via G(s)-class of G alpha proteins (GNAL or GNAS). The protein is Trace amine-associated receptor 5 (TAAR5) of Pan troglodytes (Chimpanzee).